Consider the following 187-residue polypeptide: UPF0340 protein stu1894 (187 aa).

The protein belongs to the UPF0340 family.

This Streptococcus thermophilus (strain ATCC BAA-250 / LMG 18311) protein is UPF0340 protein stu1894.